A 170-amino-acid polypeptide reads, in one-letter code: Photosystem II extrinsic protein V (170 aa).

Positions 1-33 (MASLFASLGRSLIKLLIVLPVIIGLSISSPAMA) are cleaved as a signal peptide. Residues Cys70, Cys73, His74, and His125 each coordinate heme c.

The protein belongs to the cytochrome c family. PsbV subfamily. As to quaternary structure, PSII is composed of 1 copy each of membrane proteins PsbA, PsbB, PsbC, PsbD, PsbE, PsbF, PsbH, PsbI, PsbJ, PsbK, PsbL, PsbM, PsbT, PsbX, PsbY, Psb30/Ycf12, peripheral proteins PsbO, CyanoQ (PsbQ), PsbU, PsbV and a large number of cofactors. It forms dimeric complexes. Requires heme c as cofactor.

The protein resides in the cellular thylakoid membrane. One of the extrinsic, lumenal subunits of photosystem II (PSII). PSII is a light-driven water plastoquinone oxidoreductase, using light energy to abstract electrons from H(2)O, generating a proton gradient subsequently used for ATP formation. The extrinsic proteins stabilize the structure of photosystem II oxygen-evolving complex (OEC), the ion environment of oxygen evolution and protect the OEC against heat-induced inactivation. Low-potential cytochrome c that plays a role in the OEC of PSII. The polypeptide is Photosystem II extrinsic protein V (Prochlorococcus marinus (strain MIT 9303)).